A 196-amino-acid polypeptide reads, in one-letter code: Dephospho-CoA kinase (196 aa).

The 191-residue stretch at alanine 6–leucine 196 folds into the DPCK domain. Glycine 14–threonine 19 lines the ATP pocket.

This sequence belongs to the CoaE family.

The protein localises to the cytoplasm. It carries out the reaction 3'-dephospho-CoA + ATP = ADP + CoA + H(+). The protein operates within cofactor biosynthesis; coenzyme A biosynthesis; CoA from (R)-pantothenate: step 5/5. In terms of biological role, catalyzes the phosphorylation of the 3'-hydroxyl group of dephosphocoenzyme A to form coenzyme A. This is Dephospho-CoA kinase from Helicobacter pylori (strain ATCC 700392 / 26695) (Campylobacter pylori).